The chain runs to 428 residues: Elongation factor 1-alpha (428 aa).

Residues 5 to 215 (KPHVNIVFIG…ALDQIPEPPK (211 aa)) form the tr-type G domain. The interval 14–21 (GHVDHGKS) is G1. GTP is bound at residue 14–21 (GHVDHGKS). Ser-21 contacts Mg(2+). Residues 68–72 (GITID) are G2. Residues 89 to 92 (DAPG) form a G3 region. Residues 89 to 93 (DAPGH) and 144 to 147 (NKMD) contribute to the GTP site. Residues 144-147 (NKMD) form a G4 region. The interval 181-183 (SAW) is G5.

It belongs to the TRAFAC class translation factor GTPase superfamily. Classic translation factor GTPase family. EF-Tu/EF-1A subfamily.

Its subcellular location is the cytoplasm. It catalyses the reaction GTP + H2O = GDP + phosphate + H(+). In terms of biological role, GTP hydrolase that promotes the GTP-dependent binding of aminoacyl-tRNA to the A-site of ribosomes during protein biosynthesis. The protein is Elongation factor 1-alpha of Thermococcus kodakarensis (strain ATCC BAA-918 / JCM 12380 / KOD1) (Pyrococcus kodakaraensis (strain KOD1)).